A 100-amino-acid chain; its full sequence is uncharacterized protein (100 aa).

Over residues 68-91 (EQYASGAGEKRKEQSSGNSRRKDP) the composition is skewed to basic and acidic residues. A disordered region spans residues 68-100 (EQYASGAGEKRKEQSSGNSRRKDPSLYNWSDVK).

This sequence belongs to the chlamydial CPn_0121/CT_031/TC_0300 family.

This is an uncharacterized protein from Chlamydia muridarum (strain MoPn / Nigg).